Here is a 277-residue protein sequence, read N- to C-terminus: Probable xyloglucan endotransglucosylase/hydrolase protein 11 (277 aa).

A signal peptide spans 1 to 24 (MRGSDQKILLMVMVVVAVVAAAQG). One can recognise a GH16 domain in the interval 32–209 (VTWGNNYYQT…PKQMPYIAKF (178 aa)). An N-linked (GlcNAc...) asparagine glycan is attached at Asn-50. Glu-107 functions as the Nucleophile in the catalytic mechanism. Xyloglucan is bound by residues 123–125 (NTN) and 133–135 (GKD). Asn-194 is a glycosylation site (N-linked (GlcNAc...) asparagine). Intrachain disulfides connect Cys-217/Cys-227 and Cys-260/Cys-273. Arg-265 contributes to the xyloglucan binding site.

It belongs to the glycosyl hydrolase 16 family. XTH group 1 subfamily. Post-translationally, contains at least one intrachain disulfide bond essential for its enzymatic activity.

The protein localises to the secreted. Its subcellular location is the cell wall. The protein resides in the extracellular space. It is found in the apoplast. The enzyme catalyses breaks a beta-(1-&gt;4) bond in the backbone of a xyloglucan and transfers the xyloglucanyl segment on to O-4 of the non-reducing terminal glucose residue of an acceptor, which can be a xyloglucan or an oligosaccharide of xyloglucan.. May catalyze xyloglucan endohydrolysis (XEH) and/or endotransglycosylation (XET). Cleaves and religates xyloglucan polymers, an essential constituent of the primary cell wall, and thereby participates in cell wall construction of growing tissues. The sequence is that of Probable xyloglucan endotransglucosylase/hydrolase protein 11 (XTH11) from Arabidopsis thaliana (Mouse-ear cress).